Consider the following 37-residue polypeptide: Cytochrome b6-f complex subunit 5 (37 aa).

The helical transmembrane segment at 5–25 threads the bilayer; it reads LLFGIVLGLIPITLAGLFVTA.

Belongs to the PetG family. As to quaternary structure, the 4 large subunits of the cytochrome b6-f complex are cytochrome b6, subunit IV (17 kDa polypeptide, PetD), cytochrome f and the Rieske protein, while the 4 small subunits are PetG, PetL, PetM and PetN. The complex functions as a dimer.

It is found in the plastid. It localises to the chloroplast thylakoid membrane. Functionally, component of the cytochrome b6-f complex, which mediates electron transfer between photosystem II (PSII) and photosystem I (PSI), cyclic electron flow around PSI, and state transitions. PetG is required for either the stability or assembly of the cytochrome b6-f complex. The sequence is that of Cytochrome b6-f complex subunit 5 from Lemna minor (Common duckweed).